The sequence spans 616 residues: Dihydroxy-acid dehydratase (616 aa).

Aspartate 81 lines the Mg(2+) pocket. Residue cysteine 122 participates in [2Fe-2S] cluster binding. Mg(2+) contacts are provided by aspartate 123 and lysine 124. Position 124 is an N6-carboxylysine (lysine 124). Cysteine 195 is a [2Fe-2S] cluster binding site. Glutamate 491 is a binding site for Mg(2+). The active-site Proton acceptor is serine 517.

It belongs to the IlvD/Edd family. In terms of assembly, homodimer. Requires [2Fe-2S] cluster as cofactor. Mg(2+) serves as cofactor.

It carries out the reaction (2R)-2,3-dihydroxy-3-methylbutanoate = 3-methyl-2-oxobutanoate + H2O. The catalysed reaction is (2R,3R)-2,3-dihydroxy-3-methylpentanoate = (S)-3-methyl-2-oxopentanoate + H2O. Its pathway is amino-acid biosynthesis; L-isoleucine biosynthesis; L-isoleucine from 2-oxobutanoate: step 3/4. It functions in the pathway amino-acid biosynthesis; L-valine biosynthesis; L-valine from pyruvate: step 3/4. Its function is as follows. Functions in the biosynthesis of branched-chain amino acids. Catalyzes the dehydration of (2R,3R)-2,3-dihydroxy-3-methylpentanoate (2,3-dihydroxy-3-methylvalerate) into 2-oxo-3-methylpentanoate (2-oxo-3-methylvalerate) and of (2R)-2,3-dihydroxy-3-methylbutanoate (2,3-dihydroxyisovalerate) into 2-oxo-3-methylbutanoate (2-oxoisovalerate), the penultimate precursor to L-isoleucine and L-valine, respectively. The protein is Dihydroxy-acid dehydratase of Escherichia coli O7:K1 (strain IAI39 / ExPEC).